Reading from the N-terminus, the 201-residue chain is Holliday junction resolvase RecU (201 aa).

Mg(2+) is bound by residues Thr-85, Asp-87, Glu-100, and Gln-119.

The protein belongs to the RecU family. The cofactor is Mg(2+).

It is found in the cytoplasm. It carries out the reaction Endonucleolytic cleavage at a junction such as a reciprocal single-stranded crossover between two homologous DNA duplexes (Holliday junction).. Endonuclease that resolves Holliday junction intermediates in genetic recombination. Cleaves mobile four-strand junctions by introducing symmetrical nicks in paired strands. Promotes annealing of linear ssDNA with homologous dsDNA. Required for DNA repair, homologous recombination and chromosome segregation. This chain is Holliday junction resolvase RecU, found in Geobacillus thermodenitrificans (strain NG80-2).